The sequence spans 850 residues: Envelope glycoprotein gp160 (850 aa).

The first 28 residues, 1–28, serve as a signal peptide directing secretion; it reads METQTSWLSLWRWGLMIFGMLMICSARE. Over 29–678 the chain is Extracellular; sequence NLWVTVYYGV…ISNWLWYIKI (650 aa). Cysteines 50 and 70 form a disulfide. N-linked (GlcNAc...) asparagine; by host glycosylation is found at Asn-84, Asn-126, Asn-133, Asn-134, Asn-139, Asn-152, Asn-156, Asn-184, Asn-193, Asn-226, Asn-230, Asn-237, Asn-258, Asn-272, Asn-285, Asn-297, Asn-327, Asn-334, and Asn-349. Disulfide bonds link Cys-115/Cys-201, Cys-122/Cys-192, Cys-127/Cys-153, Cys-214/Cys-243, and Cys-224/Cys-235. The tract at residues 127-152 is V1; that stretch reads CSDVNSNNSTDSNSSASNNSPEIMKN. A V2 region spans residues 153-192; that stretch reads CSFNVTTEIRNKRKQEYALFYRQDVVPINSDNKSYILINC. Residues 292-325 are V3; that stretch reads CTRPNNNTRKGIHMGPGQVLYATGEIIGDIRKAY. Cys-292 and Cys-326 are disulfide-bonded. Residues 357–367 form a CD4-binding loop region; that stretch reads PSGGDIEITTH. Cystine bridges form between Cys-371–Cys-436 and Cys-378–Cys-409. Residues 378 to 409 form a V4 region; that stretch reads CNTSTLFNSSWDENNIKDTNSTNDNTTITIPC. N-linked (GlcNAc...) asparagine; by host glycosylation is found at Asn-379, Asn-385, Asn-397, Asn-402, Asn-433, Asn-439, Asn-453, and Asn-457. Residues 447-467 are disordered; sequence RDGGNRNGSENGTETFRPTGG. The span at 453-462 shows a compositional bias: polar residues; it reads NGSENGTETF. V5 regions lie at residues 453–465 and 454–465; these read NGSE…FRPT and GSENGTETFRPT. The interval 506 to 526 is fusion peptide; it reads AVGIGAVFLGFLGTAGSTMGA. An immunosuppression region spans residues 568–586; that stretch reads KQLQARVLAVERYLKDQQL. A disulfide bridge links Cys-592 with Cys-598. 5 N-linked (GlcNAc...) asparagine; by host glycosylation sites follow: Asn-605, Asn-610, Asn-619, Asn-631, and Asn-668. Positions 627-661 form a coiled coil; the sequence is REINNYTGIIYSLIEEAQNQQETNEKDLLALDKWT. Positions 656 to 677 are MPER; binding to GalCer; sequence ALDKWTNLWNWFNISNWLWYIK. A helical membrane pass occupies residues 679 to 699; that stretch reads FIMIIGGLIGLRIIFAVLAIV. Topologically, residues 700-850 are cytoplasmic; the sequence is NRVRQGYSPL…IRQGLERALL (151 aa). Positions 706–709 match the YXXL motif; contains endocytosis signal motif; it reads YSPL. A lipid anchor (S-palmitoyl cysteine; by host) is attached at Cys-758. Positions 849–850 match the Di-leucine internalization motif motif; it reads LL.

Belongs to the HIV-1 env protein family. In terms of assembly, the mature envelope protein (Env) consists of a homotrimer of non-covalently associated gp120-gp41 heterodimers. The resulting complex protrudes from the virus surface as a spike. There seems to be as few as 10 spikes on the average virion. Interacts with host CD4, CCR5 and CXCR4. Gp120 also interacts with the C-type lectins CD209/DC-SIGN and CLEC4M/DC-SIGNR (collectively referred to as DC-SIGN(R)). Gp120 and gp41 interact with GalCer. Gp120 interacts with host ITGA4/ITGB7 complex; on CD4+ T-cells, this interaction results in rapid activation of integrin ITGAL/LFA-1, which facilitates efficient cell-to-cell spreading of HIV-1. Gp120 interacts with cell-associated heparan sulfate; this interaction increases virus infectivity on permissive cells and may be involved in infection of CD4- cells. The mature envelope protein (Env) consists of a homotrimer of non-covalently associated gp120-gp41 heterodimers. The resulting complex protrudes from the virus surface as a spike. There seems to be as few as 10 spikes on the average virion. Highly glycosylated by host. The high number of glycan on the protein is reffered to as 'glycan shield' because it contributes to hide protein sequence from adaptive immune system. In terms of processing, palmitoylation of the transmembrane protein and of Env polyprotein (prior to its proteolytic cleavage) is essential for their association with host cell membrane lipid rafts. Palmitoylation is therefore required for envelope trafficking to classical lipid rafts, but not for viral replication. Post-translationally, specific enzymatic cleavages in vivo yield mature proteins. Envelope glycoproteins are synthesized as an inactive precursor that is heavily N-glycosylated and processed likely by host cell furin in the Golgi to yield the mature SU and TM proteins. The cleavage site between SU and TM requires the minimal sequence [KR]-X-[KR]-R. About 2 of the 9 disulfide bonds of gp41 are reduced by P4HB/PDI, following binding to CD4 receptor.

The protein localises to the virion membrane. The protein resides in the host cell membrane. It is found in the host endosome membrane. Its function is as follows. Oligomerizes in the host endoplasmic reticulum into predominantly trimers. In a second time, gp160 transits in the host Golgi, where glycosylation is completed. The precursor is then proteolytically cleaved in the trans-Golgi and thereby activated by cellular furin or furin-like proteases to produce gp120 and gp41. In terms of biological role, attaches the virus to the host lymphoid cell by binding to the primary receptor CD4. This interaction induces a structural rearrangement creating a high affinity binding site for a chemokine coreceptor like CXCR4 and/or CCR5. Acts as a ligand for CD209/DC-SIGN and CLEC4M/DC-SIGNR, which are respectively found on dendritic cells (DCs), and on endothelial cells of liver sinusoids and lymph node sinuses. These interactions allow capture of viral particles at mucosal surfaces by these cells and subsequent transmission to permissive cells. HIV subverts the migration properties of dendritic cells to gain access to CD4+ T-cells in lymph nodes. Virus transmission to permissive T-cells occurs either in trans (without DCs infection, through viral capture and transmission), or in cis (following DCs productive infection, through the usual CD4-gp120 interaction), thereby inducing a robust infection. In trans infection, bound virions remain infectious over days and it is proposed that they are not degraded, but protected in non-lysosomal acidic organelles within the DCs close to the cell membrane thus contributing to the viral infectious potential during DCs' migration from the periphery to the lymphoid tissues. On arrival at lymphoid tissues, intact virions recycle back to DCs' cell surface allowing virus transmission to CD4+ T-cells. Acts as a class I viral fusion protein. Under the current model, the protein has at least 3 conformational states: pre-fusion native state, pre-hairpin intermediate state, and post-fusion hairpin state. During fusion of viral and target intracellular membranes, the coiled coil regions (heptad repeats) assume a trimer-of-hairpins structure, positioning the fusion peptide in close proximity to the C-terminal region of the ectodomain. The formation of this structure appears to drive apposition and subsequent fusion of viral and target cell membranes. Complete fusion occurs in host cell endosomes and is dynamin-dependent, however some lipid transfer might occur at the plasma membrane. The virus undergoes clathrin-dependent internalization long before endosomal fusion, thus minimizing the surface exposure of conserved viral epitopes during fusion and reducing the efficacy of inhibitors targeting these epitopes. Membranes fusion leads to delivery of the nucleocapsid into the cytoplasm. This Human immunodeficiency virus type 1 group M subtype J (isolate SE9173) (HIV-1) protein is Envelope glycoprotein gp160.